A 121-amino-acid polypeptide reads, in one-letter code: Small ribosomal subunit protein uS13 (121 aa).

The tract at residues 92 to 121 is disordered; sequence HRMGLPCRGQKTKTNARTRKGPRRGAARRK. The span at 101-121 shows a compositional bias: basic residues; the sequence is QKTKTNARTRKGPRRGAARRK.

Belongs to the universal ribosomal protein uS13 family. As to quaternary structure, part of the 30S ribosomal subunit. Forms a loose heterodimer with protein S19. Forms two bridges to the 50S subunit in the 70S ribosome.

In terms of biological role, located at the top of the head of the 30S subunit, it contacts several helices of the 16S rRNA. In the 70S ribosome it contacts the 23S rRNA (bridge B1a) and protein L5 of the 50S subunit (bridge B1b), connecting the 2 subunits; these bridges are implicated in subunit movement. Contacts the tRNAs in the A and P-sites. The sequence is that of Small ribosomal subunit protein uS13 from Desulfotalea psychrophila (strain LSv54 / DSM 12343).